We begin with the raw amino-acid sequence, 349 residues long: Alanine racemase (349 aa).

The active-site Proton acceptor; specific for D-alanine is Lys35. Lys35 is subject to N6-(pyridoxal phosphate)lysine. Arg130 serves as a coordination point for substrate. Tyr244 functions as the Proton acceptor; specific for L-alanine in the catalytic mechanism. Residue Met292 coordinates substrate.

Belongs to the alanine racemase family. Requires pyridoxal 5'-phosphate as cofactor.

It catalyses the reaction L-alanine = D-alanine. It participates in amino-acid biosynthesis; D-alanine biosynthesis; D-alanine from L-alanine: step 1/1. Catalyzes the interconversion of L-alanine and D-alanine. May also act on other amino acids. The chain is Alanine racemase (alr) from Cereibacter sphaeroides (strain KD131 / KCTC 12085) (Rhodobacter sphaeroides).